The primary structure comprises 523 residues: MATCFLLRSFWAARPALPPPGRFRPEPAGTPRRSYASGPGGLHADLLRGDSFVGGRWLPAPATFPVYDPASGAKLGTVADCGVPEARAAVRAAYDAFNSWKGVSVKERSLLLRKWYDLMIQNKDDLAKIITAESGKPLKEAQGEILYSALFLEWFSEEARRIYGDIIYTSAKDKRGLVLKQPVGVAAIITPWNFPSAMITRKVGAALAAGCTVVVKPAEDTPYSALALAQLANQAGIPAGVYNVIPCSRNKAKEVGEVLCTDPLVSKISFTGSTATGKILLHHAANSVKRVSMELGGLAPFIVFDSANVDQAVAGAMASKFRNAGQTCVCSNRFLVQRGIHDSFVTKFAEAMKKSLRVGNGFEEGTTQGPLINEKAVEKVEKQVNDAVAKGATVVTGGKRHQSGGNFFEPTLLSNVTRDMLCITEETFGPLAPVIKFDKEEEAVAIANAAEVGLAGYFYSQDPAQIWRVAEQLEVGMVGVNEGLISSVECPFGGVKQSGLGREGSKYGIDEYLEVKYVCYGGL.

A mitochondrion-targeting transit peptide spans 1-35 (MATCFLLRSFWAARPALPPPGRFRPEPAGTPRRSY). Lysine 74 carries the N6-acetyllysine modification. Residue lysine 114 is modified to N6-acetyllysine; alternate. Lysine 114 is subject to N6-succinyllysine; alternate. Residue lysine 123 is modified to N6-succinyllysine. N6-acetyllysine is present on lysine 128. Residue lysine 172 is modified to N6-succinyllysine. Residues arginine 201 and 216 to 219 (KPAE) each bind NAD(+). Arginine 201 is a binding site for substrate. The residue at position 253 (lysine 253) is an N6-acetyllysine; alternate. N6-succinyllysine; alternate is present on lysine 253. 272–277 (GSTATG) contributes to the NAD(+) binding site. Residue glutamate 294 is the Proton acceptor of the active site. Substrate is bound at residue arginine 322. Catalysis depends on cysteine 328, which acts as the Nucleophile. A disulfide bond links cysteine 328 and cysteine 330. Lysine 347 carries the post-translational modification N6-acetyllysine; alternate. Lysine 347 bears the N6-succinyllysine; alternate mark. Lysine 353 bears the N6-acetyllysine mark. Lysine 390 bears the N6-succinyllysine mark. Lysine 399 is modified (N6-acetyllysine). Serine 403 is modified (phosphoserine). Residue serine 486 participates in substrate binding. A Phosphoserine modification is found at serine 487.

The protein belongs to the aldehyde dehydrogenase family. In terms of assembly, homotetramer.

Its subcellular location is the mitochondrion. The enzyme catalyses succinate semialdehyde + NAD(+) + H2O = succinate + NADH + 2 H(+). It participates in amino-acid degradation; 4-aminobutanoate degradation. Redox-regulated. Inhibited under oxydizing conditions. In terms of biological role, catalyzes one step in the degradation of the inhibitory neurotransmitter gamma-aminobutyric acid (GABA). This is Succinate-semialdehyde dehydrogenase, mitochondrial (Aldh5a1) from Mus musculus (Mouse).